A 325-amino-acid chain; its full sequence is Ribosomal RNA small subunit methyltransferase H (325 aa).

Residues 1–28 are disordered; the sequence is MTASQPLDQADQDSESSSAGSSAAETEH. Residues 15 to 24 are compositionally biased toward low complexity; the sequence is ESSSAGSSAA. Residues 56–58, Asp-82, Tyr-110, Asp-131, and Gln-138 each bind S-adenosyl-L-methionine; that span reads GGH. Positions 303–325 are disordered; sequence TDEEVQANPRSRSAKLRVAKRVE. The span at 314-325 shows a compositional bias: basic residues; that stretch reads RSAKLRVAKRVE.

This sequence belongs to the methyltransferase superfamily. RsmH family.

Its subcellular location is the cytoplasm. It carries out the reaction cytidine(1402) in 16S rRNA + S-adenosyl-L-methionine = N(4)-methylcytidine(1402) in 16S rRNA + S-adenosyl-L-homocysteine + H(+). Specifically methylates the N4 position of cytidine in position 1402 (C1402) of 16S rRNA. This chain is Ribosomal RNA small subunit methyltransferase H, found in Rhodopirellula baltica (strain DSM 10527 / NCIMB 13988 / SH1).